The chain runs to 377 residues: P2Y purinoceptor 2 (377 aa).

Over 1 to 32 (MAADLGPWNDTINGTWDGDELGYRCRFNEDFK) the chain is Extracellular. N-linked (GlcNAc...) asparagine glycosylation is found at asparagine 9 and asparagine 13. Residues 33-59 (YVLLPVSYGVVCVPGLCLNAVALYIFL) form a helical membrane-spanning segment. Residues 60-70 (CRLKTWNASTT) are Cytoplasmic-facing. Residues 71-93 (YMFHLAVSDALYAASLPLLVYYY) form a helical membrane-spanning segment. Residues 94–110 (ARGDHWPFSTVLCKLVR) lie on the Extracellular side of the membrane. Cysteine 106 and cysteine 183 form a disulfide bridge. Residues 111–129 (FLFYTNLYCSILFLTCISV) traverse the membrane as a helical segment. Residues 130–152 (HRCLGVLRPLRSLRWGRARYARR) lie on the Cytoplasmic side of the membrane. The chain crosses the membrane as a helical span at residues 153-172 (VAGAVWVLVLACQAPVLYFV). Topologically, residues 173–194 (TTSARGGRVTCHDTSAPELFSR) are extracellular. Residues 195 to 220 (FVAYSSVMLGLLFAVPFAVILVCYVL) traverse the membrane as a helical segment. Over 221–246 (MARRLLKPAYGTSGGLPRAKRKSVRT) the chain is Cytoplasmic. The helical transmembrane segment at 247–269 (IAVVLAVFALCFLPFHVTRTLYY) threads the bilayer. Residues 270-287 (SFRSLDLSCHTLNAINMA) lie on the Extracellular side of the membrane. A helical membrane pass occupies residues 288–309 (YKVTRPLASANSCLDPVLYFLA). At 310-377 (GQRLVRFARD…GSENTKDIRL (68 aa)) the chain is on the cytoplasmic side. Positions 318 to 377 (RDAKPPTGPSPATPARRRLGLRRSDRTDMQRIEDVLGSSEDSRRTESTPAGSENTKDIRL) are disordered. The span at 339-363 (RRSDRTDMQRIEDVLGSSEDSRRTE) shows a compositional bias: basic and acidic residues.

Belongs to the G-protein coupled receptor 1 family. As to expression, spleen, testis, kidney, liver, lung, heart and brain.

It is found in the cell membrane. Receptor for ATP and UTP coupled to G-proteins that activate a phosphatidylinositol-calcium second messenger system. The affinity range is UTP = ATP &gt; ATP-gamma-S &gt;&gt; 2-methylthio-ATP = ADP. The chain is P2Y purinoceptor 2 (P2RY2) from Homo sapiens (Human).